The sequence spans 592 residues: A-type ATP synthase subunit A (592 aa).

Residue 231 to 238 (GGFGTGKT) coordinates ATP.

Belongs to the ATPase alpha/beta chains family. As to quaternary structure, has multiple subunits with at least A(3), B(3), C, D, E, F, H, I and proteolipid K(x).

It is found in the cell membrane. It carries out the reaction ATP + H2O + 4 H(+)(in) = ADP + phosphate + 5 H(+)(out). Functionally, component of the A-type ATP synthase that produces ATP from ADP in the presence of a proton gradient across the membrane. The A chain is the catalytic subunit. The protein is A-type ATP synthase subunit A of Staphylothermus marinus (strain ATCC 43588 / DSM 3639 / JCM 9404 / F1).